The primary structure comprises 346 residues: Heat-inducible transcription repressor HrcA (346 aa).

Belongs to the HrcA family.

In terms of biological role, negative regulator of class I heat shock genes (grpE-dnaK-dnaJ and groELS operons). Prevents heat-shock induction of these operons. The protein is Heat-inducible transcription repressor HrcA of Fructilactobacillus sanfranciscensis (Lactobacillus sanfranciscensis).